Reading from the N-terminus, the 864-residue chain is Leucine--tRNA ligase (864 aa).

The short motif at 40-51 (PYPSGAGLHVGH) is the 'HIGH' region element. Positions 636 to 640 (KMSKS) match the 'KMSKS' region motif. Residue Lys639 participates in ATP binding.

It belongs to the class-I aminoacyl-tRNA synthetase family.

Its subcellular location is the cytoplasm. The enzyme catalyses tRNA(Leu) + L-leucine + ATP = L-leucyl-tRNA(Leu) + AMP + diphosphate. The polypeptide is Leucine--tRNA ligase (Leptospira borgpetersenii serovar Hardjo-bovis (strain JB197)).